Reading from the N-terminus, the 522-residue chain is Maturase K (522 aa).

It belongs to the intron maturase 2 family. MatK subfamily.

The protein localises to the plastid. The protein resides in the chloroplast. Its function is as follows. Usually encoded in the trnK tRNA gene intron. Probably assists in splicing its own and other chloroplast group II introns. This is Maturase K from Iris domestica (Leopard lily).